A 259-amino-acid chain; its full sequence is Thiazole synthase (259 aa).

Lys100 acts as the Schiff-base intermediate with DXP in catalysis. 1-deoxy-D-xylulose 5-phosphate-binding positions include Gly161, 187–188 (AG), and 209–210 (NT).

Belongs to the ThiG family. In terms of assembly, homotetramer. Forms heterodimers with either ThiH or ThiS.

The protein resides in the cytoplasm. The catalysed reaction is [ThiS sulfur-carrier protein]-C-terminal-Gly-aminoethanethioate + 2-iminoacetate + 1-deoxy-D-xylulose 5-phosphate = [ThiS sulfur-carrier protein]-C-terminal Gly-Gly + 2-[(2R,5Z)-2-carboxy-4-methylthiazol-5(2H)-ylidene]ethyl phosphate + 2 H2O + H(+). It participates in cofactor biosynthesis; thiamine diphosphate biosynthesis. Its function is as follows. Catalyzes the rearrangement of 1-deoxy-D-xylulose 5-phosphate (DXP) to produce the thiazole phosphate moiety of thiamine. Sulfur is provided by the thiocarboxylate moiety of the carrier protein ThiS. In vitro, sulfur can be provided by H(2)S. In Methylobacillus flagellatus (strain ATCC 51484 / DSM 6875 / VKM B-1610 / KT), this protein is Thiazole synthase.